A 208-amino-acid polypeptide reads, in one-letter code: Uridine kinase (208 aa).

Gly11–Ser18 is an ATP binding site.

The protein belongs to the uridine kinase family.

It is found in the cytoplasm. It carries out the reaction uridine + ATP = UMP + ADP + H(+). The enzyme catalyses cytidine + ATP = CMP + ADP + H(+). Its pathway is pyrimidine metabolism; CTP biosynthesis via salvage pathway; CTP from cytidine: step 1/3. It participates in pyrimidine metabolism; UMP biosynthesis via salvage pathway; UMP from uridine: step 1/1. The chain is Uridine kinase from Clostridium perfringens (strain ATCC 13124 / DSM 756 / JCM 1290 / NCIMB 6125 / NCTC 8237 / Type A).